Reading from the N-terminus, the 261-residue chain is Transmembrane protein 106A (261 aa).

Residues 95–115 (VFLAVSICLVTSSLIIFFLFP) form a helical membrane-spanning segment.

This sequence belongs to the TMEM106 family.

It localises to the cell membrane. Functionally, activates macrophages and polarizes them into M1-like macrophages through the activation of the MAPK and NF-kappaB signaling pathway. Upon activation, up-regulates the expression of CD80, CD86, CD69 and MHC II on macrophages, and induces the release of pro-inflammatory cytokines such as TNF, IL1B, IL6, CCL2 and nitric oxide. May play a role in inhibition of proliferation and migration. The chain is Transmembrane protein 106A (TMEM106A) from Bos taurus (Bovine).